A 130-amino-acid polypeptide reads, in one-letter code: Fluoride-specific ion channel FluC (130 aa).

4 helical membrane-spanning segments follow: residues 2-22, 35-55, 72-92, and 107-127; these read GLLLILVGIGGGLGAMSRFAL, IGILLCNIIGSLIIGMMAAFL, LFVTGFLGGFTTFSSFSLDIL, and ILVSVIVSLIAVILGFYFIMG. Positions 79 and 82 each coordinate Na(+).

The protein belongs to the fluoride channel Fluc/FEX (TC 1.A.43) family.

It localises to the cell inner membrane. The enzyme catalyses fluoride(in) = fluoride(out). Its activity is regulated as follows. Na(+) is not transported, but it plays an essential structural role and its presence is essential for fluoride channel function. In terms of biological role, fluoride-specific ion channel. Important for reducing fluoride concentration in the cell, thus reducing its toxicity. The sequence is that of Fluoride-specific ion channel FluC from Francisella philomiragia subsp. philomiragia (strain ATCC 25017 / CCUG 19701 / FSC 153 / O#319-036).